We begin with the raw amino-acid sequence, 94 residues long: Large ribosomal subunit protein uL23 (94 aa).

This sequence belongs to the universal ribosomal protein uL23 family. Part of the 50S ribosomal subunit. Contacts protein L29, and trigger factor when it is bound to the ribosome.

Its function is as follows. One of the early assembly proteins it binds 23S rRNA. One of the proteins that surrounds the polypeptide exit tunnel on the outside of the ribosome. Forms the main docking site for trigger factor binding to the ribosome. The polypeptide is Large ribosomal subunit protein uL23 (Symbiobacterium thermophilum (strain DSM 24528 / JCM 14929 / IAM 14863 / T)).